A 217-amino-acid polypeptide reads, in one-letter code: Oxygen regulatory protein NreC (217 aa).

In terms of domain architecture, Response regulatory spans Lys2–Tyr119. Asp53 carries the 4-aspartylphosphate modification. The HTH luxR-type domain occupies Thr148–Lys213. Positions Asn172–Thr191 form a DNA-binding region, H-T-H motif.

Phosphorylated by NreB.

It is found in the cytoplasm. Its function is as follows. Member of the two-component regulatory system NreB/NreC involved in the control of dissimilatory nitrate/nitrite reduction in response to oxygen. Phosphorylated NreC binds to a GC-rich palindromic sequence at the promoters of the nitrate (narGHJI) and nitrite (nir) reductase operons, as well as the putative nitrate transporter gene narT, and activates their expression. This chain is Oxygen regulatory protein NreC (nreC), found in Staphylococcus carnosus (strain TM300).